The sequence spans 205 residues: Holliday junction branch migration complex subunit RuvA (205 aa).

The segment at 1–64 (MIGRLNGILV…EDAQLLFGFN (64 aa)) is domain I. The domain II stretch occupies residues 65–143 (NKVERALFRE…NWGNDLFTPF (79 aa)). The tract at residues 144 to 156 (SDSAVIEPFSDAT) is flexible linker. The segment at 157 to 205 (IANNAADDAVSALVSLGYKLPQAQKAVKSVSKPDMSTEVLIKESLKSML) is domain III.

Belongs to the RuvA family. In terms of assembly, homotetramer. Forms an RuvA(8)-RuvB(12)-Holliday junction (HJ) complex. HJ DNA is sandwiched between 2 RuvA tetramers; dsDNA enters through RuvA and exits via RuvB. An RuvB hexamer assembles on each DNA strand where it exits the tetramer. Each RuvB hexamer is contacted by two RuvA subunits (via domain III) on 2 adjacent RuvB subunits; this complex drives branch migration. In the full resolvosome a probable DNA-RuvA(4)-RuvB(12)-RuvC(2) complex forms which resolves the HJ.

The protein resides in the cytoplasm. The RuvA-RuvB-RuvC complex processes Holliday junction (HJ) DNA during genetic recombination and DNA repair, while the RuvA-RuvB complex plays an important role in the rescue of blocked DNA replication forks via replication fork reversal (RFR). RuvA specifically binds to HJ cruciform DNA, conferring on it an open structure. The RuvB hexamer acts as an ATP-dependent pump, pulling dsDNA into and through the RuvAB complex. HJ branch migration allows RuvC to scan DNA until it finds its consensus sequence, where it cleaves and resolves the cruciform DNA. In Pseudoalteromonas translucida (strain TAC 125), this protein is Holliday junction branch migration complex subunit RuvA.